We begin with the raw amino-acid sequence, 114 residues long: Nucleoid-associated protein SGR_3378 (114 aa).

Belongs to the YbaB/EbfC family. Homodimer.

It localises to the cytoplasm. The protein resides in the nucleoid. Its function is as follows. Binds to DNA and alters its conformation. May be involved in regulation of gene expression, nucleoid organization and DNA protection. The chain is Nucleoid-associated protein SGR_3378 from Streptomyces griseus subsp. griseus (strain JCM 4626 / CBS 651.72 / NBRC 13350 / KCC S-0626 / ISP 5235).